The primary structure comprises 669 residues: RNA-binding protein 14 (669 aa).

2 RRM domains span residues 1–73 and 79–149; these read MKIF…MSRP and WKIF…LSTK. Residues Lys-126, Lys-135, Lys-138, Lys-149, and Lys-153 each participate in a glycyl lysine isopeptide (Lys-Gly) (interchain with G-Cter in SUMO2) cross-link. 2 disordered regions span residues 147-175 and 193-232; these read STKG…DTAF and NSTG…PLTA. Ser-161 is subject to Phosphoserine. Lys-164 carries the N6-acetyllysine; alternate modification. Lys-164 participates in a covalent cross-link: Glycyl lysine isopeptide (Lys-Gly) (interchain with G-Cter in SUMO2); alternate. At Thr-206 the chain carries Phosphothreonine. Phosphoserine occurs at positions 220, 242, 244, 256, 272, and 280. The segment at 284 to 303 is disordered; sequence PYRGQLASPSSQSAAASSLG. The span at 287 to 303 shows a compositional bias: low complexity; it reads GQLASPSSQSAAASSLG. The TRBP-interacting domain; interaction with STIL stretch occupies residues 307 to 354; the sequence is GAQPSASALSSYGGQAAAASSLNSYGAQGSSLASYGNQPSSYGAQAAS. A phosphoserine mark is found at Ser-520, Ser-523, Ser-527, and Ser-562. The segment at 566-592 is disordered; that stretch reads VANANSTPPPYERTRLSPPRASYDDPY. Position 572 is a phosphothreonine (Thr-572). At Ser-582 the chain carries Phosphoserine. Residue Lys-600 forms a Glycyl lysine isopeptide (Lys-Gly) (interchain with G-Cter in SUMO2) linkage. Residues Ser-618, Ser-620, Ser-623, Ser-627, Ser-643, and Ser-649 each carry the phosphoserine modification.

In terms of assembly, interacts with NCOA6, CITED1 and XRCC5/KU86. Interacts with SS18. Interacts with STIL and interferes with its interaction with CPAP. Interacts with gamma-tubulin. Part of the HDP-RNP complex composed of at least HEXIM1, PRKDC, XRCC5, XRCC6, paraspeckle proteins (SFPQ, NONO, PSPC1, RBM14, and MATR3) and NEAT1 RNA.

It localises to the nucleus. The protein localises to the nucleolus. It is found in the cytoplasm. Its function is as follows. May function as a nuclear receptor coactivator, enhancing transcription through other coactivators such as NCOA6 and CITED1. Regulates centriole biogenesis by suppressing the formation of aberrant centriolar protein complexes in the cytoplasm and thus preserving mitotic spindle integrity. Prevents the formation of the STIL-CPAP complex (which can induce the formation of aberrant centriolar protein complexes) by interfering with the interaction of STIL with CPAP. Plays a role in the regulation of DNA virus-mediated innate immune response by assembling into the HDP-RNP complex, a complex that serves as a platform for IRF3 phosphorylation and subsequent innate immune response activation through the cGAS-STING pathway. In Pongo abelii (Sumatran orangutan), this protein is RNA-binding protein 14 (RBM14).